The sequence spans 882 residues: Homeobox-leucine zipper protein ROC3 (882 aa).

A disordered region spans residues 104 to 144 (DVDDDHKPQHSGHDQPPDAAQPSGAAGGNAKKKRYHRHTAH). Residues 107 to 119 (DDHKPQHSGHDQP) show a composition bias toward basic and acidic residues. The segment covering 133–143 (AKKKRYHRHTA) has biased composition (basic residues). The homeobox DNA-binding region spans 134–193 (KKKRYHRHTAHQIQQMEALFKECPHPDDKQRLKLSQELGLKPRQVKFWFQNRRTQMKAQQ). The stretch at 200 to 263 (ILRAENENLK…LDRLACIATR (64 aa)) forms a coiled coil. Residues 340–584 (QEQDKQLVVD…LQRQCERLAS (245 aa)) form the START domain. The span at 782-816 (AAAPTISSSTTTTTGNGNGETSSTPPRNSSSNNNN) shows a compositional bias: low complexity. The tract at residues 782 to 820 (AAAPTISSSTTTTTGNGNGETSSTPPRNSSSNNNNADEL) is disordered.

This sequence belongs to the HD-ZIP homeobox family. Class IV subfamily.

Its subcellular location is the nucleus. Probable transcription factor. The sequence is that of Homeobox-leucine zipper protein ROC3 (ROC3) from Oryza sativa subsp. japonica (Rice).